Consider the following 337-residue polypeptide: Transaldolase (337 aa).

The Nuclear localization signal motif lies at 1-10 (MSSSPVKRQR). N6-acetyllysine is present on Lys115. The active-site Schiff-base intermediate with substrate is the Lys142. At Lys219 the chain carries N6-acetyllysine. Residues Ser237 and Ser256 each carry the phosphoserine modification. An N6-acetyllysine mark is found at Lys269, Lys286, and Lys321.

It belongs to the transaldolase family. Type 1 subfamily. Homodimer. Heterodimer with isoform 2. Interacts with KPNA1 and KPNA4.

Its subcellular location is the nucleus. It is found in the cytoplasm. The enzyme catalyses D-sedoheptulose 7-phosphate + D-glyceraldehyde 3-phosphate = D-erythrose 4-phosphate + beta-D-fructose 6-phosphate. It participates in carbohydrate degradation; pentose phosphate pathway; D-glyceraldehyde 3-phosphate and beta-D-fructose 6-phosphate from D-ribose 5-phosphate and D-xylulose 5-phosphate (non-oxidative stage): step 2/3. Functionally, catalyzes the rate-limiting step of the non-oxidative phase in the pentose phosphate pathway. Catalyzes the reversible conversion of sedheptulose-7-phosphate and D-glyceraldehyde 3-phosphate into erythrose-4-phosphate and beta-D-fructose 6-phosphate. Not only acts as a pentose phosphate pathway enzyme, but also affects other metabolite pathways by altering its subcellular localization between the nucleus and the cytoplasm. The sequence is that of Transaldolase from Homo sapiens (Human).